The following is a 398-amino-acid chain: tRNA-specific 2-thiouridylase MnmA (398 aa).

Residues 18 to 25 (AMSGGVDS) and Leu-44 each bind ATP. Cys-112 serves as the catalytic Nucleophile. Cysteines 112 and 213 form a disulfide. Gly-136 is a binding site for ATP. The interaction with tRNA stretch occupies residues 163-165 (RDQ). The active-site Cysteine persulfide intermediate is the Cys-213.

This sequence belongs to the MnmA/TRMU family.

It is found in the cytoplasm. It carries out the reaction S-sulfanyl-L-cysteinyl-[protein] + uridine(34) in tRNA + AH2 + ATP = 2-thiouridine(34) in tRNA + L-cysteinyl-[protein] + A + AMP + diphosphate + H(+). Catalyzes the 2-thiolation of uridine at the wobble position (U34) of tRNA, leading to the formation of s(2)U34. In Sinorhizobium fredii (strain NBRC 101917 / NGR234), this protein is tRNA-specific 2-thiouridylase MnmA.